Consider the following 142-residue polypeptide: Small ribosomal subunit protein bS6 (142 aa).

Basic and acidic residues predominate over residues Asn110–Glu133. Positions Asn110–Lys142 are disordered.

The protein belongs to the bacterial ribosomal protein bS6 family.

Functionally, binds together with bS18 to 16S ribosomal RNA. This Helicobacter pylori (strain Shi470) protein is Small ribosomal subunit protein bS6.